The chain runs to 54 residues: Large ribosomal subunit protein bL33A (54 aa).

It belongs to the bacterial ribosomal protein bL33 family.

This chain is Large ribosomal subunit protein bL33A, found in Mycobacterium marinum (strain ATCC BAA-535 / M).